We begin with the raw amino-acid sequence, 500 residues long: Aldehyde dehydrogenase, mitochondrial (500 aa).

4 positions are modified to N6-acetyllysine: Lys-35, Lys-56, Lys-61, and Lys-142. 245–250 lines the NAD(+) pocket; the sequence is GSTEVG. The active-site Proton acceptor is the Glu-268. Residue Cys-302 is the Nucleophile of the active site. Lys-351, Lys-358, Lys-366, Lys-390, Lys-409, Lys-411, Lys-424, and Lys-434 each carry N6-acetyllysine.

It belongs to the aldehyde dehydrogenase family. Homotetramer. Post-translationally, in response to mitochondrial stress, the precursor protein is ubiquitinated by the SIFI complex in the cytoplasm before mitochondrial import, leading to its degradation. Within the SIFI complex, UBR4 initiates ubiquitin chain that are further elongated or branched by KCMF1.

It is found in the mitochondrion matrix. The catalysed reaction is an aldehyde + NAD(+) + H2O = a carboxylate + NADH + 2 H(+). Its pathway is alcohol metabolism; ethanol degradation; acetate from ethanol: step 2/2. Required for clearance of cellular formaldehyde, a cytotoxic and carcinogenic metabolite that induces DNA damage. This chain is Aldehyde dehydrogenase, mitochondrial (ALDH2), found in Mesocricetus auratus (Golden hamster).